Here is a 67-residue protein sequence, read N- to C-terminus: Ayadualin (67 aa).

The first 20 residues, 1 to 20, serve as a signal peptide directing secretion; it reads MNKIILFSAVFLALVFCAEA. A compositionally biased stretch (acidic residues) spans 35 to 54; the sequence is PDDTVDIDEGLPDAFDEDYE. The segment at 35–67 is disordered; the sequence is PDDTVDIDEGLPDAFDEDYEQDGHNPYPCRGDC. The short motif at 64 to 66 is the Integrin-binding motif element; sequence RGD.

Salivary gland.

It localises to the secreted. Its function is as follows. Inhibits collagen- and ADP-induced host platelet aggregation by blocking the binding of host integrin alpha-IIb/beta-3 (ITGA2B/ITGB3) to fibrinogen. Inhibits the intrinsic blood coagulation pathway in the host by blocking the activity of host coagulation factor XIIa (F12). This chain is Ayadualin, found in Lutzomyia ayacuchensis (Sand fly).